Consider the following 47-residue polypeptide: NADH dehydrogenase [ubiquinone] iron-sulfur protein 2 (47 aa).

The protein belongs to the complex I 49 kDa subunit family. As to quaternary structure, complex I is composed of about 45 different subunits. This is a component of the iron-sulfur (IP) fragment of the enzyme.

It is found in the mitochondrion inner membrane. It catalyses the reaction a ubiquinone + NADH + 5 H(+)(in) = a ubiquinol + NAD(+) + 4 H(+)(out). Its function is as follows. Core subunit of the mitochondrial membrane respiratory chain NADH dehydrogenase (Complex I) that is believed to belong to the minimal assembly required for catalysis. Complex I functions in the transfer of electrons from NADH to the respiratory chain. The immediate electron acceptor for the enzyme is believed to be ubiquinone. Component of the iron-sulfur (IP) fragment of the enzyme. In Solanum tuberosum (Potato), this protein is NADH dehydrogenase [ubiquinone] iron-sulfur protein 2 (NAD7).